The primary structure comprises 106 residues: Terpredoxin (106 aa).

In terms of domain architecture, 2Fe-2S ferredoxin-type spans 2–106 (PRVVFIDEQS…GLIVRVPLPA (105 aa)). [2Fe-2S] cluster contacts are provided by Cys-40, Cys-46, Cys-49, and Cys-87.

It belongs to the adrenodoxin/putidaredoxin family. The cofactor is [2Fe-2S] cluster.

The oxidation of alpha-terpineol by cytochrome p450-TERP requires the participation of a flavoprotein, terpredoxin reductase, and an iron-sulfur protein, terpredoxin, to mediate the transfer of electrons from NADH to P450 for oxygen activation. In Pseudomonas sp, this protein is Terpredoxin (terPB).